Consider the following 458-residue polypeptide: UDP-glycosyltransferase 76G1 (458 aa).

The active-site Proton acceptor is the H25. Rebaudioside A is bound at residue H25. H25 is a rubusoside binding site. Residue N27 coordinates UDP. The active-site Charge relay is the D124. Residues 146 to 147 (TS) and H155 each bind rebaudioside A. Residues S283, 338–339 (WV), and 356–364 (HSGWNSTLE) each bind UDP. Rebaudioside A-binding positions include W359 and 380–381 (DQ).

The protein belongs to the UDP-glycosyltransferase family. In terms of assembly, monomer.

The catalysed reaction is steviolbioside + UDP-alpha-D-glucose = rebaudioside B + UDP + H(+). It carries out the reaction stevioside + UDP-alpha-D-glucose = rebaudioside A + UDP + H(+). It catalyses the reaction rebaudioside E + UDP-alpha-D-glucose = rebaudioside D + UDP + H(+). The enzyme catalyses rebaudioside D + UDP-alpha-D-glucose = rebaudioside M + UDP + H(+). Involved in the biosynthesis of steviol glycosides in leaves. Converts the di-glycoside steviolbioside to the tri-glycoside rebaudioside B. Converts the tri-glycoside stevioside to the tetra-glycoside rebaudioside A. Converts the tetra-glycoside rebaudioside E to the penta-glycoside rebaudioside D. Converts the penta-glycoside rebaudioside D to the hexa-glycoside rebaudioside M. Can glucosylate rubusoside and rebaudioside A in vitro. This is UDP-glycosyltransferase 76G1 from Stevia rebaudiana (Stevia).